We begin with the raw amino-acid sequence, 478 residues long: Ribulose bisphosphate carboxylase large chain (478 aa).

A propeptide spanning residues 1–2 (MS) is cleaved from the precursor. Pro3 bears the N-acetylproline mark. N6,N6,N6-trimethyllysine is present on Lys14. 2 residues coordinate substrate: Asn123 and Thr173. The Proton acceptor role is filled by Lys175. Lys177 is a binding site for substrate. 3 residues coordinate Mg(2+): Lys201, Asp203, and Glu204. The residue at position 201 (Lys201) is an N6-carboxylysine. His294 (proton acceptor) is an active-site residue. Positions 295, 327, and 379 each coordinate substrate.

The protein belongs to the RuBisCO large chain family. Type I subfamily. Heterohexadecamer of 8 large chains and 8 small chains; disulfide-linked. The disulfide link is formed within the large subunit homodimers. The cofactor is Mg(2+). Post-translationally, the disulfide bond which can form in the large chain dimeric partners within the hexadecamer appears to be associated with oxidative stress and protein turnover.

Its subcellular location is the plastid. The protein resides in the chloroplast. It catalyses the reaction 2 (2R)-3-phosphoglycerate + 2 H(+) = D-ribulose 1,5-bisphosphate + CO2 + H2O. The catalysed reaction is D-ribulose 1,5-bisphosphate + O2 = 2-phosphoglycolate + (2R)-3-phosphoglycerate + 2 H(+). In terms of biological role, ruBisCO catalyzes two reactions: the carboxylation of D-ribulose 1,5-bisphosphate, the primary event in carbon dioxide fixation, as well as the oxidative fragmentation of the pentose substrate in the photorespiration process. Both reactions occur simultaneously and in competition at the same active site. This chain is Ribulose bisphosphate carboxylase large chain, found in Neurachne tenuifolia.